A 204-amino-acid polypeptide reads, in one-letter code: Inactive ribonuclease-like protein 9 (204 aa).

Residues 1 to 26 form the signal peptide; the sequence is MMRTPITTHPLLLLLLLQQLLQPVQF. Disulfide bonds link C97–C152, C115–C167, and C122–C129. N-linked (GlcNAc...) asparagine glycans are attached at residues N130 and N142.

This sequence belongs to the pancreatic ribonuclease family.

The protein localises to the secreted. Its function is as follows. Does not exhibit any ribonuclease activity. The sequence is that of Inactive ribonuclease-like protein 9 (RNASE9) from Macaca nemestrina (Pig-tailed macaque).